A 327-amino-acid polypeptide reads, in one-letter code: Probable cell division protein WhiA (327 aa).

A DNA-binding region (H-T-H motif) is located at residues 275-308 (SLEELGRLADPPMTKDAVAGRIRRLLSMADRKAK). Residues 304 to 327 (DRKAKQDGIPDTESAVTPDLLEDA) form a disordered region.

Belongs to the WhiA family.

Involved in cell division and chromosome segregation. The chain is Probable cell division protein WhiA from Mycolicibacterium gilvum (strain PYR-GCK) (Mycobacterium gilvum (strain PYR-GCK)).